The sequence spans 395 residues: Chorismate synthase (395 aa).

NADP(+)-binding residues include arginine 40 and arginine 46. Residues 137-139 (RSS), glycine 308, 323-327 (KPLPT), and arginine 349 each bind FMN.

This sequence belongs to the chorismate synthase family. Homotetramer. It depends on FMNH2 as a cofactor.

It carries out the reaction 5-O-(1-carboxyvinyl)-3-phosphoshikimate = chorismate + phosphate. The protein operates within metabolic intermediate biosynthesis; chorismate biosynthesis; chorismate from D-erythrose 4-phosphate and phosphoenolpyruvate: step 7/7. Functionally, catalyzes the anti-1,4-elimination of the C-3 phosphate and the C-6 proR hydrogen from 5-enolpyruvylshikimate-3-phosphate (EPSP) to yield chorismate, which is the branch point compound that serves as the starting substrate for the three terminal pathways of aromatic amino acid biosynthesis. This reaction introduces a second double bond into the aromatic ring system. The protein is Chorismate synthase of Gloeobacter violaceus (strain ATCC 29082 / PCC 7421).